Reading from the N-terminus, the 985-residue chain is DNA ligase 4 (985 aa).

Disordered regions lie at residues 1-27 (MDRL…RNKH) and 43-70 (LNGN…QTLS). The span at 10 to 20 (ETERELDEKYP) shows a compositional bias: basic and acidic residues. Residues 46-61 (NKKRPTGPAAARKKLG) show a composition bias toward basic residues. ATP is bound by residues Glu-310, Lys-312, Leu-313, Arg-317, Glu-379, Phe-420, Glu-480, Lys-485, Lys-502, and Lys-504. Lys-312 (N6-AMP-lysine intermediate) is an active-site residue. Glu-379 lines the Mg(2+) pocket. Glu-480 lines the Mg(2+) pocket. 2 consecutive BRCT domains span residues 711–804 (PSGH…PDLL) and 878–983 (LRGW…RFAP).

This sequence belongs to the ATP-dependent DNA ligase family. The cofactor is Mg(2+).

Its subcellular location is the nucleus. It carries out the reaction ATP + (deoxyribonucleotide)n-3'-hydroxyl + 5'-phospho-(deoxyribonucleotide)m = (deoxyribonucleotide)n+m + AMP + diphosphate.. Functionally, DNA ligase involved in DNA non-homologous end joining (NHEJ); required for double-strand break (DSB) repair. This is DNA ligase 4 (LIG4) from Coccidioides immitis (strain RS) (Valley fever fungus).